A 300-amino-acid polypeptide reads, in one-letter code: Sulfate adenylyltransferase subunit 2 (300 aa).

Residues 281 to 300 are disordered; the sequence is RAIDRDEAGSMEKKKREGYF.

The protein belongs to the PAPS reductase family. CysD subfamily. Heterodimer composed of CysD, the smaller subunit, and CysN.

It catalyses the reaction sulfate + ATP + H(+) = adenosine 5'-phosphosulfate + diphosphate. It functions in the pathway sulfur metabolism; hydrogen sulfide biosynthesis; sulfite from sulfate: step 1/3. Its function is as follows. With CysN forms the ATP sulfurylase (ATPS) that catalyzes the adenylation of sulfate producing adenosine 5'-phosphosulfate (APS) and diphosphate, the first enzymatic step in sulfur assimilation pathway. APS synthesis involves the formation of a high-energy phosphoric-sulfuric acid anhydride bond driven by GTP hydrolysis by CysN coupled to ATP hydrolysis by CysD. This Brucella abortus (strain 2308) protein is Sulfate adenylyltransferase subunit 2.